Consider the following 784-residue polypeptide: DNA repair and recombination protein RAD54-like (784 aa).

The segment at 1–54 (MRRSLAPSQRGPMRPESRHSFTPPLLKKNKRSCQQELEREQELDRKRQSALRDA) is disordered. The segment at 2-9 (RRSLAPSQ) is required for chromatin remodeling, strand pairing activities and coupling of ATPase activity. The residue at position 20 (S20) is a Phosphoserine. T22 carries the post-translational modification Phosphothreonine. Over residues 36 to 47 (ELEREQELDRKR) the composition is skewed to basic and acidic residues. In terms of domain architecture, Helicase ATP-binding spans 172 to 346 (EGKRGNFNGC…YSLVNFVNPE (175 aa)). 185–192 (DEMGLGKT) serves as a coordination point for ATP. The DEGH box motif lies at 297–300 (DEGH). The region spanning 503–660 (LLDFMLAAIR…NNESAEKHFT (158 aa)) is the Helicase C-terminal domain. The segment at 751 to 784 (EEAASEQPEEKPDRRKRPSTPPSDDSADEDFLGF) is disordered. Residues 775–784 (DSADEDFLGF) show a composition bias toward acidic residues.

Belongs to the SNF2/RAD54 helicase family. In terms of assembly, interacts (via N-terminus) with spn-A/Rad51.

Its subcellular location is the nucleus. Functionally, involved in mitotic DNA repair and meiotic recombination. Functions in the recombinational DNA repair pathway. Essential for interhomolog gene conversion (GC), but may have a less important role in intersister GC than spn-A/Rad51. In the presence of DNA, spn-A/Rad51 enhances the ATPase activity of okr/Rad54. The sequence is that of DNA repair and recombination protein RAD54-like from Drosophila yakuba (Fruit fly).